A 119-amino-acid chain; its full sequence is Large ribosomal subunit protein bL20 (119 aa).

This sequence belongs to the bacterial ribosomal protein bL20 family.

Binds directly to 23S ribosomal RNA and is necessary for the in vitro assembly process of the 50S ribosomal subunit. It is not involved in the protein synthesizing functions of that subunit. This chain is Large ribosomal subunit protein bL20, found in Acinetobacter baumannii (strain SDF).